Reading from the N-terminus, the 432-residue chain is D-amino acid dehydrogenase (432 aa).

FAD is bound at residue Val-3–Trp-17.

Belongs to the DadA oxidoreductase family. It depends on FAD as a cofactor.

The catalysed reaction is a D-alpha-amino acid + A + H2O = a 2-oxocarboxylate + AH2 + NH4(+). The protein operates within amino-acid degradation; D-alanine degradation; NH(3) and pyruvate from D-alanine: step 1/1. Functionally, oxidative deamination of D-amino acids. The sequence is that of D-amino acid dehydrogenase from Klebsiella pneumoniae (strain 342).